A 527-amino-acid chain; its full sequence is MEKYLEDELPGDRVECLRQVEFEKDCWGETGMQLPCRLNKPVKPSVLDAQSLGVSLIAFRTLSSVKHTSRLCMTGRLGLKKGCLLVEEVGVCIPLFEPGDQVGQLRSTQTTSKRKAASRKGQREQRVNARLQEERRKDMAFAESIWTFMPGKKGSVVQGPNTRTLTNAHDGILDDINCAQIAGKHVGDHSNCANVIKAGVISLLGKLVQYPERPGEPFCRYYMKFGECKHMTFCKYNHPKDRFSCKTTNTIRSESLCLHDQQTTILENQFGLPSLVDKATANTTNLVASASSSMTPDEIGEGKNNPDEVFVCICGEKLLFHTNFNTTAVKELVVFALQRRNIKYCDIYVTWLIPMEYERMDELIDRAVRDNNNDLFYYVNLPPELINPYKDTWVTFLSDFSRYIIHQLLQYLNDTFGDPPSWIADISWVPDMWKTYNYSPNNNSTLWTPRYTLDLNSCSHFARNFLNHFGREVSLQAAEAAVSQNLEFLLPTIMMLMPVYSGPHHWNNDFMEILLNTNSDRSNGQIS.

The tract at residues 103 to 127 (GQLRSTQTTSKRKAASRKGQREQRV) is disordered. A C3H1-type zinc finger spans residues 213–241 (RPGEPFCRYYMKFGECKHMTFCKYNHPKD).

In Oryza sativa subsp. japonica (Rice), this protein is Putative zinc finger CCCH domain-containing protein 64.